Reading from the N-terminus, the 167-residue chain is Endoribonuclease YbeY (167 aa).

Zn(2+) is bound by residues His-131, His-135, and His-141.

It belongs to the endoribonuclease YbeY family. The cofactor is Zn(2+).

It localises to the cytoplasm. Its function is as follows. Single strand-specific metallo-endoribonuclease involved in late-stage 70S ribosome quality control and in maturation of the 3' terminus of the 16S rRNA. The protein is Endoribonuclease YbeY of Rickettsia conorii (strain ATCC VR-613 / Malish 7).